A 1068-amino-acid polypeptide reads, in one-letter code: Receptor-like protein 13 (1068 aa).

The first 23 residues, 1–23 (MEGKLFLGQYLICVILLLGQLHG), serve as a signal peptide directing secretion. Residues 24-986 (YKSCIEKERK…EADESTVDME (963 aa)) are Extracellular-facing. Residues asparagine 59 and asparagine 97 are each glycosylated (N-linked (GlcNAc...) asparagine). LRR repeat units lie at residues 104–129 (FEDV…LFDD), 139–162 (LRNL…FLNA), 164–187 (TSLT…EFKD), 188–212 (LTNL…DYNS), 216–239 (FRKL…FLNS), 241–264 (TSLK…ELRD), 265–290 (LTNV…LFAL), 292–315 (KLKA…KFAK), 325–349 (WKNM…LTSL), 350–373 (TGLR…LANL), 375–397 (SLEY…LLAN), 398–423 (LSKL…SWKP), 424–447 (KFQL…LLHQ), 448–471 (KDLH…LLEN), 472–497 (NTKL…AHNL), 499–517 (FLNV…NFGW), 519–543 (LPHL…LDNM), 544–567 (KSIE…FLKG), and 569–594 (YNLT…NFTR). Asparagine 153 carries an N-linked (GlcNAc...) asparagine glycan. N-linked (GlcNAc...) asparagine glycosylation occurs at asparagine 202. A glycan (N-linked (GlcNAc...) asparagine) is linked at asparagine 279. N-linked (GlcNAc...) asparagine glycosylation occurs at asparagine 397. Residues asparagine 471, asparagine 482, and asparagine 501 are each glycosylated (N-linked (GlcNAc...) asparagine). Asparagine 570 and asparagine 591 each carry an N-linked (GlcNAc...) asparagine glycan. Residues 596–615 (WVMSMDNNLFTGNIGKGFRS) form an LRR 20; degenerate repeat. LRR repeat units lie at residues 616–639 (LPSL…WIGE), 641–664 (QGLF…LFNI), 665–688 (SYLQ…VSSI), 690–710 (HGAV…DTLL), and 711–734 (LNVI…INTQ). Residue asparagine 663 is glycosylated (N-linked (GlcNAc...) asparagine). The N-linked (GlcNAc...) asparagine glycan is linked to asparagine 700. 5 N-linked (GlcNAc...) asparagine glycosylation sites follow: asparagine 735, asparagine 745, asparagine 771, asparagine 780, and asparagine 822. 2 LRR repeats span residues 736–757 (ISIL…FCSL) and 758–781 (SNIQ…LSNT). 4 LRR repeats span residues 846 to 870 (LKLL…LGGL), 871 to 893 (VELE…SFSG), 895 to 918 (KNVE…LTDM), and 920 to 943 (SLAV…QFNT). Asparagine 877 and asparagine 882 each carry an N-linked (GlcNAc...) asparagine glycan. 2 N-linked (GlcNAc...) asparagine glycosylation sites follow: asparagine 925 and asparagine 930. Residues 987–1007 (SFYWSFVAAYVTILLGILASL) traverse the membrane as a helical segment. At 1008 to 1068 (SFDSPWSRAW…PPALFHKTRT (61 aa)) the chain is on the cytoplasmic side.

The protein belongs to the RLP family.

The protein localises to the cell membrane. This is Receptor-like protein 13 from Arabidopsis thaliana (Mouse-ear cress).